We begin with the raw amino-acid sequence, 311 residues long: MRLVFLGTPAFAVPTLEAVVRAGHEVAAVLTQPDRPRGRGQNPAASPVKQAALALSLEVYQPERVRRPEPVEFLRGIGARAMVIVGYGQIIPQNVIDLAPLGIINVHASLLPKYRGAGPIQWSIVNGETRTGVTTMRIDAGLDTGDMLLKRDTEIGPEENAMELGARLAVLGADLLVKTLAGLEAGTIVPEKQDDSQATLAPLLKKEDGRIDWAQPALAIHNRVRGLQPWPGAQTTFRGQPLHIWKSRPVTAAQAAAPGAVLRTRPLLVASGEGALELLEVQQEGRKRIPAADFANGQRLTENEKLGEGHL.

109 to 112 (SLLP) contributes to the (6S)-5,6,7,8-tetrahydrofolate binding site.

The protein belongs to the Fmt family.

The catalysed reaction is L-methionyl-tRNA(fMet) + (6R)-10-formyltetrahydrofolate = N-formyl-L-methionyl-tRNA(fMet) + (6S)-5,6,7,8-tetrahydrofolate + H(+). In terms of biological role, attaches a formyl group to the free amino group of methionyl-tRNA(fMet). The formyl group appears to play a dual role in the initiator identity of N-formylmethionyl-tRNA by promoting its recognition by IF2 and preventing the misappropriation of this tRNA by the elongation apparatus. The chain is Methionyl-tRNA formyltransferase from Solibacter usitatus (strain Ellin6076).